Here is a 577-residue protein sequence, read N- to C-terminus: Pentatricopeptide repeat-containing protein At1g06143 (577 aa).

PPR repeat units lie at residues 59 to 89 (DCRL…MQEP), 90 to 124 (NVFV…SVSP), 125 to 155 (SSYT…KFGF), 158 to 192 (HVKI…DDIA), 193 to 219 (WTTM…MSEK), 220 to 250 (NEAT…MPVK), 251 to 285 (DIIS…GIIP), 286 to 320 (DEVT…GFVL), 321 to 351 (DVYI…LPKK), 352 to 386 (NLFC…SVKP), 387 to 417 (NAVT…MIDD), and 423 to 453 (NVEH…MEFE). Positions 458 to 534 (IWGALLDGCR…CPGTSSIRID (77 aa)) are type E motif. The type E(+) motif stretch occupies residues 535 to 565 (KRDHLFAAADKSHSASDEVCLLLDEIYDQMG).

Belongs to the PPR family. PCMP-E subfamily.

The chain is Pentatricopeptide repeat-containing protein At1g06143 (EMB1444) from Arabidopsis thaliana (Mouse-ear cress).